The following is a 180-amino-acid chain: Cytochrome b6-f complex subunit 4 (180 aa).

The next 3 membrane-spanning stretches (helical) occupy residues 36–56 (LSYI…GLAV), 95–115 (LLGV…PFLE), and 131–151 (TVSL…ALPI).

Belongs to the cytochrome b family. PetD subfamily. As to quaternary structure, the 4 large subunits of the cytochrome b6-f complex are cytochrome b6, subunit IV (17 kDa polypeptide, petD), cytochrome f and the Rieske protein, while the 4 small subunits are petG, petL, petM and petN. The complex functions as a dimer.

The protein localises to the plastid. It localises to the chloroplast thylakoid membrane. Its function is as follows. Component of the cytochrome b6-f complex, which mediates electron transfer between photosystem II (PSII) and photosystem I (PSI), cyclic electron flow around PSI, and state transitions. This is Cytochrome b6-f complex subunit 4 from Pinus thunbergii (Japanese black pine).